Reading from the N-terminus, the 158-residue chain is Transcriptional repressor NrdR (158 aa).

Residues 3 to 34 (CPYCGFEESKVVDSRSTEDHKAIRRRRECLKC) fold into a zinc finger. The region spanning 49-139 (VLVIKRDSNR…VYRQFKDINT (91 aa)) is the ATP-cone domain.

It belongs to the NrdR family. Zn(2+) serves as cofactor.

In terms of biological role, negatively regulates transcription of bacterial ribonucleotide reductase nrd genes and operons by binding to NrdR-boxes. The sequence is that of Transcriptional repressor NrdR from Clostridium novyi (strain NT).